Consider the following 400-residue polypeptide: tRNA-specific adenosine deaminase 1 (400 aa).

The A to I editase domain occupies 76–400 (SIATGVKALP…WIPTRTDDVK (325 aa)). Zn(2+) is bound at residue H101. The Proton donor role is filled by E103. 1D-myo-inositol hexakisphosphate is bound at residue R108. Residues C157 and C223 each contribute to the Zn(2+) site. 4 residues coordinate 1D-myo-inositol hexakisphosphate: K226, R232, K369, and R375.

The protein belongs to the ADAT1 family. It depends on 1D-myo-inositol hexakisphosphate as a cofactor. Zn(2+) is required as a cofactor.

It catalyses the reaction adenosine(37) in tRNA(Ala) + H2O + H(+) = inosine(37) in tRNA(Ala) + NH4(+). Functionally, deaminates adenosine-37 to inosine in tRNA-Ala. This Saccharomyces cerevisiae (strain ATCC 204508 / S288c) (Baker's yeast) protein is tRNA-specific adenosine deaminase 1 (TAD1).